Reading from the N-terminus, the 356-residue chain is Alanine racemase, catabolic (356 aa).

The active-site Proton acceptor; specific for D-alanine is lysine 35. An N6-(pyridoxal phosphate)lysine modification is found at lysine 35. Arginine 130 lines the substrate pocket. The Proton acceptor; specific for L-alanine role is filled by tyrosine 253. Methionine 301 is a binding site for substrate.

Belongs to the alanine racemase family. It depends on pyridoxal 5'-phosphate as a cofactor.

It catalyses the reaction L-alanine = D-alanine. Its function is as follows. Isomerizes L-alanine to D-alanine which is then oxidized to pyruvate by DadA. The chain is Alanine racemase, catabolic (dadB) from Klebsiella aerogenes (Enterobacter aerogenes).